A 343-amino-acid polypeptide reads, in one-letter code: MLQTDNLTAAQPQRIVAAQTASAQEELLERALRPKTLDDYIGQHKAKEQLAIFIQAAKKRGEALDHVLLFGPPGLGKTTLAHIIAKELGVNLRQTSGPVLERAGDLAALLTNLDPHDVLFIDEIHRLSPVVEEILYPALEDYRLDIMIGEGPAARSVKIDLPPFTLVGATTRAGMLTNPLRDRFGIVSRLEFYENRDLATIVSRSAQLLQLDMSEEGAEEIAKRSRGTPRIANRLLRRVRDFADVKNNGTIDGGIADAALSMLDVDVQGLDVMDRKFLEAVLHKFGGGPVGLDNVAAAIGESTDTIEDVIEPYLIQQGFLQRTPRGRMATERAYLHFGLPVEK.

The large ATPase domain (RuvB-L) stretch occupies residues 4–193; it reads TDNLTAAQPQ…FGIVSRLEFY (190 aa). Residues leucine 32, arginine 33, glycine 74, lysine 77, threonine 78, threonine 79, 140 to 142, arginine 183, tyrosine 193, and arginine 230 each bind ATP; that span reads EDY. Threonine 78 contributes to the Mg(2+) binding site. Residues 194 to 264 form a small ATPAse domain (RuvB-S) region; the sequence is ENRDLATIVS…IADAALSMLD (71 aa). Positions 267–343 are head domain (RuvB-H); that stretch reads VQGLDVMDRK…YLHFGLPVEK (77 aa). Residues arginine 322 and arginine 327 each coordinate DNA.

It belongs to the RuvB family. Homohexamer. Forms an RuvA(8)-RuvB(12)-Holliday junction (HJ) complex. HJ DNA is sandwiched between 2 RuvA tetramers; dsDNA enters through RuvA and exits via RuvB. An RuvB hexamer assembles on each DNA strand where it exits the tetramer. Each RuvB hexamer is contacted by two RuvA subunits (via domain III) on 2 adjacent RuvB subunits; this complex drives branch migration. In the full resolvosome a probable DNA-RuvA(4)-RuvB(12)-RuvC(2) complex forms which resolves the HJ.

It is found in the cytoplasm. The catalysed reaction is ATP + H2O = ADP + phosphate + H(+). Functionally, the RuvA-RuvB-RuvC complex processes Holliday junction (HJ) DNA during genetic recombination and DNA repair, while the RuvA-RuvB complex plays an important role in the rescue of blocked DNA replication forks via replication fork reversal (RFR). RuvA specifically binds to HJ cruciform DNA, conferring on it an open structure. The RuvB hexamer acts as an ATP-dependent pump, pulling dsDNA into and through the RuvAB complex. RuvB forms 2 homohexamers on either side of HJ DNA bound by 1 or 2 RuvA tetramers; 4 subunits per hexamer contact DNA at a time. Coordinated motions by a converter formed by DNA-disengaged RuvB subunits stimulates ATP hydrolysis and nucleotide exchange. Immobilization of the converter enables RuvB to convert the ATP-contained energy into a lever motion, pulling 2 nucleotides of DNA out of the RuvA tetramer per ATP hydrolyzed, thus driving DNA branch migration. The RuvB motors rotate together with the DNA substrate, which together with the progressing nucleotide cycle form the mechanistic basis for DNA recombination by continuous HJ branch migration. Branch migration allows RuvC to scan DNA until it finds its consensus sequence, where it cleaves and resolves cruciform DNA. The protein is Holliday junction branch migration complex subunit RuvB of Neisseria meningitidis serogroup A / serotype 4A (strain DSM 15465 / Z2491).